The sequence spans 199 residues: CASP-like protein 1D2 (199 aa).

The disordered stretch occupies residues 1–27; it reads MASTENPDPETGKSEPIPASATPPPSS. The residue at position 2 (A2) is an N-acetylalanine. Residues 2–36 lie on the Cytoplasmic side of the membrane; it reads ASTENPDPETGKSEPIPASATPPPSSAASFLDCRK. Residues 37–57 traverse the membrane as a helical segment; it reads IDIITRVLLFSATLTALIVMV. At 58–85 the chain is on the extracellular side; sequence TSDQTEMTQLPGVSSPAPVSAEFNDSPA. The chain crosses the membrane as a helical span at residues 86–106; sequence FIYFVVALVVASFYALISTLV. At 107–129 the chain is on the cytoplasmic side; sequence SISLLLKPEFTAQFSIYLASLDM. The helical transmembrane segment at 130–150 threads the bilayer; it reads VMLGILASATGTAGGVAYIAL. Residues 151 to 171 lie on the Extracellular side of the membrane; that stretch reads KGNEEVGWNKICNVYDKFCRY. The helical transmembrane segment at 172 to 192 threads the bilayer; the sequence is IATSLALSLFASLLLLVLSIW. Topologically, residues 193 to 199 are cytoplasmic; it reads SALSKRT.

The protein belongs to the Casparian strip membrane proteins (CASP) family. As to quaternary structure, homodimer and heterodimers. As to expression, expressed in the root endodermis and flowers.

It localises to the cell membrane. The sequence is that of CASP-like protein 1D2 from Arabidopsis thaliana (Mouse-ear cress).